A 72-amino-acid polypeptide reads, in one-letter code: Large ribosomal subunit protein uL29 (72 aa).

Belongs to the universal ribosomal protein uL29 family.

This is Large ribosomal subunit protein uL29 from Microcystis aeruginosa (strain NIES-843 / IAM M-2473).